The chain runs to 350 residues: Kelch domain-containing protein 8A (350 aa).

Kelch repeat units lie at residues 1–31, 32–79, 81–127, 128–175, 176–222, 224–278, and 279–326; these read MEVPNVKDFQWKRLAPLPSRRVYCSLLETGG, QVYA…ALGK, IMVI…AKDY, RVYA…LRGS, KIYV…TLDN, LYSL…GLSG, and RVIV…VFKN.

The polypeptide is Kelch domain-containing protein 8A (Klhdc8a) (Mus musculus (Mouse)).